The primary structure comprises 672 residues: COBRA-like protein 10 (672 aa).

The N-terminal stretch at 1–35 (MRAIDVKTGMKIPWDVRYSLSLFIFLSSILFLSNG) is a signal peptide. N-linked (GlcNAc...) asparagine glycosylation is found at Asn-79, Asn-135, Asn-264, Asn-328, Asn-339, Asn-368, Asn-422, Asn-442, Asn-483, Asn-562, Asn-570, and Asn-589. A CBM2 domain is found at 502-607 (KLPCPDNCGV…PVPGKQQSVI (106 aa)). Ser-646 is lipidated: GPI-anchor amidated serine. Positions 647 to 672 (SGHRRGISVSMSFVFATIAAFALMMD) are cleaved as a propeptide — removed in mature form. The Required for processing by the PIG complex, a critical step for apical plasma membrane localization in pollen tubes motif lies at 664-672 (IAAFALMMD).

This sequence belongs to the COBRA family. Post-translationally, the GPI-anchor attachment at Ser-646 requires APTG1. In terms of tissue distribution, expressed in roots, stems, leaves, flowers and siliques. Specific expression in the pollen tube.

It localises to the cell membrane. The protein resides in the cytoplasm. It is found in the vesicle. Its function is as follows. Involved in the deposition of apical pectin cap and cellulose microfibrils in pollen tubes. Not essential for pollen development, hydration or germination, but required for pollen tubes growth in the female transmitting tract of pistil and toward micropyles, via the perception of ovule guidance cues. The polypeptide is COBRA-like protein 10 (Arabidopsis thaliana (Mouse-ear cress)).